A 739-amino-acid chain; its full sequence is Poly(A) polymerase gamma (739 aa).

Position 2 is an N6-acetyllysine (Lys-2). Ser-23 bears the Phosphoserine mark. ATP contacts are provided by residues 99–101 (FGS), Thr-108, 112–114 (DID), Asp-166, Lys-227, Tyr-236, and 245–246 (GV). Mg(2+)-binding residues include Asp-112, Asp-114, and Asp-166. Residues 506–566 (KSLSDVSRSS…PTGEIERSSA (61 aa)) are disordered. 2 stretches are compositionally biased toward polar residues: residues 509 to 531 (SDVS…TCLD) and 538 to 556 (SGTP…NPDS). Ser-524 carries the phosphoserine modification. Phosphoserine is present on residues Ser-602 and Ser-651. Thr-657 bears the Phosphothreonine mark. The segment covering 677–688 (SRAAEDRKRKPM) has biased composition (basic and acidic residues). Positions 677–725 (SRAAEDRKRKPMDSIGGESMPIPTIDTARKKRLPSKELPDSSSPVPANN) are disordered. Phosphoserine is present on Ser-711.

This sequence belongs to the poly(A) polymerase family. Requires Mg(2+) as cofactor. It depends on Mn(2+) as a cofactor.

The protein resides in the nucleus. The enzyme catalyses RNA(n) + ATP = RNA(n)-3'-adenine ribonucleotide + diphosphate. Its function is as follows. Responsible for the post-transcriptional adenylation of the 3'-terminal of mRNA precursors and several small RNAs including signal recognition particle (SRP) RNA, nuclear 7SK RNA, U2 small nuclear RNA, and ribosomal 5S RNA. The polypeptide is Poly(A) polymerase gamma (Papolg) (Mus musculus (Mouse)).